Here is a 642-residue protein sequence, read N- to C-terminus: Threonine--tRNA ligase (642 aa).

The TGS domain occupies 1-61; it reads MPVITLPDGS…ENDAQLSIIT (61 aa). A catalytic region spans residues 243–534; the sequence is DHRKIGKQLD…LTEEFAGFFP (292 aa). An N6-acetyllysine modification is found at Lys286. 3 residues coordinate Zn(2+): Cys334, His385, and His511.

This sequence belongs to the class-II aminoacyl-tRNA synthetase family. As to quaternary structure, homodimer. The cofactor is Zn(2+).

The protein resides in the cytoplasm. The enzyme catalyses tRNA(Thr) + L-threonine + ATP = L-threonyl-tRNA(Thr) + AMP + diphosphate + H(+). Functionally, catalyzes the attachment of threonine to tRNA(Thr) in a two-step reaction: L-threonine is first activated by ATP to form Thr-AMP and then transferred to the acceptor end of tRNA(Thr). Also edits incorrectly charged L-seryl-tRNA(Thr). The chain is Threonine--tRNA ligase from Shigella boydii serotype 18 (strain CDC 3083-94 / BS512).